The primary structure comprises 171 residues: uncharacterized protein (171 aa).

This is an uncharacterized protein from Encephalitozoon cuniculi (strain GB-M1) (Microsporidian parasite).